We begin with the raw amino-acid sequence, 201 residues long: Protein GrpE (201 aa).

The segment at 1-32 is disordered; sequence MTDRDRQPEDTTAPTGEPVVSKPYIMPDDPEP.

Belongs to the GrpE family. Homodimer.

It is found in the cytoplasm. In terms of biological role, participates actively in the response to hyperosmotic and heat shock by preventing the aggregation of stress-denatured proteins, in association with DnaK and GrpE. It is the nucleotide exchange factor for DnaK and may function as a thermosensor. Unfolded proteins bind initially to DnaJ; upon interaction with the DnaJ-bound protein, DnaK hydrolyzes its bound ATP, resulting in the formation of a stable complex. GrpE releases ADP from DnaK; ATP binding to DnaK triggers the release of the substrate protein, thus completing the reaction cycle. Several rounds of ATP-dependent interactions between DnaJ, DnaK and GrpE are required for fully efficient folding. The sequence is that of Protein GrpE from Bradyrhizobium diazoefficiens (strain JCM 10833 / BCRC 13528 / IAM 13628 / NBRC 14792 / USDA 110).